The sequence spans 863 residues: Bifunctional uridylyltransferase/uridylyl-removing enzyme (863 aa).

The tract at residues 1-328 is uridylyltransferase; the sequence is MLFSPTLSSL…SSNQDTVIDQ (328 aa). Residues 329-687 are uridylyl-removing; sequence LDDDFQLINQ…ISNRFSLGGT (359 aa). The region spanning 446–568 is the HD domain; sequence VDEHTLRVML…MQNQVRLDYL (123 aa). 2 consecutive ACT domains span residues 688–764 and 794–863; these read EVFI…KLPA and EMEL…QQIR.

This sequence belongs to the GlnD family. Requires Mg(2+) as cofactor.

It carries out the reaction [protein-PII]-L-tyrosine + UTP = [protein-PII]-uridylyl-L-tyrosine + diphosphate. The enzyme catalyses [protein-PII]-uridylyl-L-tyrosine + H2O = [protein-PII]-L-tyrosine + UMP + H(+). Uridylyltransferase (UTase) activity is inhibited by glutamine, while glutamine activates uridylyl-removing (UR) activity. Modifies, by uridylylation and deuridylylation, the PII regulatory proteins (GlnB and homologs), in response to the nitrogen status of the cell that GlnD senses through the glutamine level. Under low glutamine levels, catalyzes the conversion of the PII proteins and UTP to PII-UMP and PPi, while under higher glutamine levels, GlnD hydrolyzes PII-UMP to PII and UMP (deuridylylation). Thus, controls uridylylation state and activity of the PII proteins, and plays an important role in the regulation of nitrogen assimilation and metabolism. This chain is Bifunctional uridylyltransferase/uridylyl-removing enzyme, found in Haemophilus influenzae (strain ATCC 51907 / DSM 11121 / KW20 / Rd).